The sequence spans 446 residues: Na(+)-translocating NADH-quinone reductase subunit A (446 aa).

Belongs to the NqrA family. As to quaternary structure, composed of six subunits; NqrA, NqrB, NqrC, NqrD, NqrE and NqrF.

The enzyme catalyses a ubiquinone + n Na(+)(in) + NADH + H(+) = a ubiquinol + n Na(+)(out) + NAD(+). In terms of biological role, NQR complex catalyzes the reduction of ubiquinone-1 to ubiquinol by two successive reactions, coupled with the transport of Na(+) ions from the cytoplasm to the periplasm. NqrA to NqrE are probably involved in the second step, the conversion of ubisemiquinone to ubiquinol. The sequence is that of Na(+)-translocating NADH-quinone reductase subunit A from Histophilus somni (strain 2336) (Haemophilus somnus).